The primary structure comprises 295 residues: Nitrogenase iron protein 1 (295 aa).

Residue 13–20 (GKGGIGKS) coordinates ATP. A [4Fe-4S] cluster-binding site is contributed by cysteine 101. ADP-ribosylarginine; by dinitrogenase reductase ADP-ribosyltransferase is present on arginine 104. Cysteine 135 contributes to the [4Fe-4S] cluster binding site.

The protein belongs to the NifH/BchL/ChlL family. In terms of assembly, homodimer. [4Fe-4S] cluster is required as a cofactor. In terms of processing, the reversible ADP-ribosylation of Arg-104 inactivates the nitrogenase reductase and regulates nitrogenase activity.

It carries out the reaction N2 + 8 reduced [2Fe-2S]-[ferredoxin] + 16 ATP + 16 H2O = H2 + 8 oxidized [2Fe-2S]-[ferredoxin] + 2 NH4(+) + 16 ADP + 16 phosphate + 6 H(+). The key enzymatic reactions in nitrogen fixation are catalyzed by the nitrogenase complex, which has 2 components: the iron protein and the molybdenum-iron protein. The sequence is that of Nitrogenase iron protein 1 (nifH1) from Nostoc sp. (strain PCC 7120 / SAG 25.82 / UTEX 2576).